Here is a 520-residue protein sequence, read N- to C-terminus: Tetratricopeptide repeat protein 6 (520 aa).

TPR repeat units lie at residues 57–90 (MTMCALLAKVQMKAKRTKEAVEVLKKALDAISHS), 101–138 (ADCLYNLGLCYMEEGNLQMTYKLAITDLTTAISMDKNS), 139–172 (YTAFYNRALCYTKIRELQMALTDYGIVLLLDATE), 176–209 (LNTFLNRGLIYVELGQYGFALEDFKQAALISRTN), 210–243 (GSLCHATAMCHHRINEFEEAVNFFTWALKINPCF), 245–280 (DAYVGRGNSYMEYGHDEATKQAQKDFLKALHINPAY), 281–314 (IKARISFGYNLQAQGKFQKAWNHFTIAIDTDPKN), 320–347 (GRAVVCLQMGNNFAAMQDINAAMKISTT), 348–381 (AEFLTNRGVIHEFMGHKQNAMKDYQDAITLNPKY), 382–415 (SLAYFNAGNIYFHHRQFSQASDYFSKALKFDPEN), 416–449 (EYVLMNRAITNTILKKYEEAKEDFANVIESCPFW), 450–483 (AAVYFNRAHFYYCLKQYELAEEDLNKALSLKPND), and 484–517 (ALVYNFRAKVRGKIGLIEEAMADYNQALDLEDYA).

The polypeptide is Tetratricopeptide repeat protein 6 (Homo sapiens (Human)).